Consider the following 250-residue polypeptide: MSQAAETLDGWYSLHLFYAVDWASLRLVPKDERDALVTEFQSFLENTATVRSSKSGDQAIYNITGQKADLLLWFLRPEMKSLNHIENEFNKLRIADFLIPTYSYVSVIELSNYLAGKSDEDPYENPHIKARLYPELPHSDYICFYPMNKRRNETYNWYMLTMEERQKLMYDHGMIGRKYAGKIKQFITGSVGFDDFEWGVTLFSDDVLQFKKIVYEMRFDETTARYGEFGSFFVGHLINTNEFDQFFAIS.

Fe-coproporphyrin III is bound by residues Arg-131, 145–149 (YPMNK), His-172, and Gln-185. The active site involves Tyr-145.

It belongs to the ChdC family. Type 1 subfamily. Fe-coproporphyrin III serves as cofactor.

It carries out the reaction Fe-coproporphyrin III + 2 H2O2 + 2 H(+) = heme b + 2 CO2 + 4 H2O. The catalysed reaction is Fe-coproporphyrin III + H2O2 + H(+) = harderoheme III + CO2 + 2 H2O. It catalyses the reaction harderoheme III + H2O2 + H(+) = heme b + CO2 + 2 H2O. Its pathway is porphyrin-containing compound metabolism; protoheme biosynthesis. Involved in coproporphyrin-dependent heme b biosynthesis. Catalyzes the decarboxylation of Fe-coproporphyrin III (coproheme) to heme b (protoheme IX), the last step of the pathway. The reaction occurs in a stepwise manner with a three-propionate intermediate. The protein is Coproheme decarboxylase of Staphylococcus aureus (strain MSSA476).